Consider the following 171-residue polypeptide: Sec-independent protein translocase protein TatB (171 aa).

The chain crosses the membrane as a helical span at residues 1-21; that stretch reads MFDIGFSELLLVFIIGLVVLG. The disordered stretch occupies residues 117–171; that stretch reads KDNEAAHEGVTPAAAQTQASSPEQKPETTPEPVVKPAADAEPKTAAPSPSSSDKP. The span at 130–139 shows a compositional bias: polar residues; the sequence is AAQTQASSPE.

Belongs to the TatB family. The Tat system comprises two distinct complexes: a TatABC complex, containing multiple copies of TatA, TatB and TatC subunits, and a separate TatA complex, containing only TatA subunits. Substrates initially bind to the TatABC complex, which probably triggers association of the separate TatA complex to form the active translocon.

The protein resides in the cell inner membrane. In terms of biological role, part of the twin-arginine translocation (Tat) system that transports large folded proteins containing a characteristic twin-arginine motif in their signal peptide across membranes. Together with TatC, TatB is part of a receptor directly interacting with Tat signal peptides. TatB may form an oligomeric binding site that transiently accommodates folded Tat precursor proteins before their translocation. The protein is Sec-independent protein translocase protein TatB of Escherichia coli O157:H7.